We begin with the raw amino-acid sequence, 302 residues long: Cyclin-C (302 aa).

The Cyclin N-terminal domain maps to 46-152; that stretch reads NFITAVATEG…VYDSEFILVE (107 aa). The interval 281-302 is disordered; that stretch reads LPKPNQQPPPQQQHQHQQGYHL. A compositionally biased stretch (low complexity) spans 292 to 302; sequence QQHQHQQGYHL.

The protein belongs to the cyclin family. Cyclin C subfamily. As to quaternary structure, component of the Mediator complex.

The protein localises to the nucleus. In terms of biological role, component of the Mediator complex, a coactivator involved in regulated gene transcription of nearly all RNA polymerase II-dependent genes. Mediator functions as a bridge to convey information from gene-specific regulatory proteins to the basal RNA polymerase II transcription machinery. Mediator is recruited to promoters by direct interactions with regulatory proteins and serves as a scaffold for the assembly of a functional preinitiation complex with RNA polymerase II and the general transcription factors. Binds to and activates cyclin-dependent kinase cdk-8 that phosphorylates the CTD (C-terminal domain) of the large subunit of RNA polymerase II (RNAp II), which may inhibit the formation of a transcription initiation complex. In Caenorhabditis elegans, this protein is Cyclin-C (cic-1).